A 544-amino-acid chain; its full sequence is Chaperonin GroEL (544 aa).

ATP contacts are provided by residues 30-33, K51, 87-91, G415, 479-481, and D495; these read TLGP, DGTTT, and NAA.

It belongs to the chaperonin (HSP60) family. Forms a cylinder of 14 subunits composed of two heptameric rings stacked back-to-back. Interacts with the co-chaperonin GroES.

It is found in the cytoplasm. It catalyses the reaction ATP + H2O + a folded polypeptide = ADP + phosphate + an unfolded polypeptide.. Together with its co-chaperonin GroES, plays an essential role in assisting protein folding. The GroEL-GroES system forms a nano-cage that allows encapsulation of the non-native substrate proteins and provides a physical environment optimized to promote and accelerate protein folding. The polypeptide is Chaperonin GroEL (Francisella tularensis subsp. tularensis (strain SCHU S4 / Schu 4)).